Here is a 119-residue protein sequence, read N- to C-terminus: uncharacterized protein (119 aa).

This is an uncharacterized protein from Shigella flexneri.